The chain runs to 267 residues: Putative ankyrin repeat protein RF_1099 (267 aa).

4 ANK repeats span residues 46 to 75 (DPIT…GVNQ), 78 to 107 (LGWV…SMSL), 136 to 165 (DGIT…NPNV), and 170 to 199 (TGMT…DPNI). Positions 238–265 (KQKIIKERNSIKTRNKEKEKEIKKLFNS) form a coiled coil.

This Rickettsia felis (strain ATCC VR-1525 / URRWXCal2) (Rickettsia azadi) protein is Putative ankyrin repeat protein RF_1099.